A 1091-amino-acid polypeptide reads, in one-letter code: Exonuclease/helicase subunit RexB (1091 aa).

The protein belongs to the helicase family. AddB/RexB type 2 subfamily. As to quaternary structure, heterodimer of RexA (AddA) and RexB. Requires Mg(2+) as cofactor.

Functionally, involved in DNA double-strand break repair. Is not involved in recombination during natural competence or in plasmid establishment. In terms of biological role, the heterodimer acts as both an ATP-dependent DNA helicase and an ATP-dependent, dual-direction single-stranded exonuclease. Recognizes the chi site generating a DNA molecule suitable for the initiation of homologous recombination. This subunit has 5' -&gt; 3' nuclease activity but not helicase activity. The protein is Exonuclease/helicase subunit RexB of Streptococcus pneumoniae serotype 4 (strain ATCC BAA-334 / TIGR4).